The primary structure comprises 179 residues: Acireductone dioxygenase (179 aa).

Residues 1–23 are disordered; the sequence is MVQAWYMDESTADPRMPHRAQPD. Fe(2+)-binding residues include H88, H90, E94, and H133. Residues H88, H90, E94, and H133 each contribute to the Ni(2+) site.

The protein belongs to the acireductone dioxygenase (ARD) family. As to quaternary structure, monomer. Interacts with MMP14. Fe(2+) is required as a cofactor. Ni(2+) serves as cofactor. In terms of tissue distribution, detected in prostate, liver, heart, brain, muscle, kidney and seminal vesicles.

The protein localises to the cytoplasm. Its subcellular location is the nucleus. It is found in the cell membrane. It carries out the reaction 1,2-dihydroxy-5-(methylsulfanyl)pent-1-en-3-one + O2 = 4-methylsulfanyl-2-oxobutanoate + formate + 2 H(+). It catalyses the reaction 1,2-dihydroxy-5-(methylsulfanyl)pent-1-en-3-one + O2 = 3-(methylsulfanyl)propanoate + CO + formate + 2 H(+). It functions in the pathway amino-acid biosynthesis; L-methionine biosynthesis via salvage pathway; L-methionine from S-methyl-5-thio-alpha-D-ribose 1-phosphate: step 5/6. Catalyzes 2 different reactions between oxygen and the acireductone 1,2-dihydroxy-3-keto-5-methylthiopentene (DHK-MTPene) depending upon the metal bound in the active site. Fe-containing acireductone dioxygenase (Fe-ARD) produces formate and 2-keto-4-methylthiobutyrate (KMTB), the alpha-ketoacid precursor of methionine in the methionine recycle pathway. Ni-containing acireductone dioxygenase (Ni-ARD) produces methylthiopropionate, carbon monoxide and formate, and does not lie on the methionine recycle pathway. Also down-regulates cell migration mediated by MMP14. The sequence is that of Acireductone dioxygenase (Adi1) from Rattus norvegicus (Rat).